The following is a 215-amino-acid chain: Eukaryotic translation initiation factor 4E (215 aa).

Residues 1 to 27 (MAERDSEPRVNIIRPDDEPEVEEERVP) are disordered. Phosphoserine; by PKC is present on Ser207.

Belongs to the eukaryotic initiation factor 4E family. EIF4F is a multi-subunit complex, the composition of which varies with external and internal environmental conditions. It is composed of at least eIF4A, eIF4E and eIF4G. eIF4E is also known to interact with other partners. In terms of processing, phosphorylation increases the ability of the protein to bind to mRNA caps and to form the eIF4F complex.

Functionally, recognizes and binds the 7-methylguanosine-containing mRNA cap during an early step in the initiation of protein synthesis and facilitates ribosome binding by inducing the unwinding of the mRNAs secondary structures. The protein is Eukaryotic translation initiation factor 4E of Aplysia californica (California sea hare).